Consider the following 489-residue polypeptide: tRNA(Ile)-lysidine synthase (489 aa).

35 to 40 (SGGLDS) is a binding site for ATP.

This sequence belongs to the tRNA(Ile)-lysidine synthase family.

The protein localises to the cytoplasm. It catalyses the reaction cytidine(34) in tRNA(Ile2) + L-lysine + ATP = lysidine(34) in tRNA(Ile2) + AMP + diphosphate + H(+). Ligates lysine onto the cytidine present at position 34 of the AUA codon-specific tRNA(Ile) that contains the anticodon CAU, in an ATP-dependent manner. Cytidine is converted to lysidine, thus changing the amino acid specificity of the tRNA from methionine to isoleucine. The polypeptide is tRNA(Ile)-lysidine synthase (Burkholderia mallei (strain ATCC 23344)).